Reading from the N-terminus, the 309-residue chain is Tagatose-6-phosphate kinase (309 aa).

This sequence belongs to the carbohydrate kinase PfkB family. LacC subfamily.

It catalyses the reaction D-tagatofuranose 6-phosphate + ATP = D-tagatofuranose 1,6-bisphosphate + ADP + H(+). Its pathway is carbohydrate metabolism; D-tagatose 6-phosphate degradation; D-glyceraldehyde 3-phosphate and glycerone phosphate from D-tagatose 6-phosphate: step 1/2. The sequence is that of Tagatose-6-phosphate kinase from Streptococcus pneumoniae (strain Hungary19A-6).